A 384-amino-acid polypeptide reads, in one-letter code: GTPase Obg (384 aa).

Residues 1-159 form the Obg domain; that stretch reads MKFIDEAKIE…RSLQLELKVL (159 aa). The tract at residues 20–46 is disordered; sequence ATSFRREKFVPRGGPDGGDGGKGGSVW. Gly residues predominate over residues 33–43; that stretch reads GPDGGDGGKGG. The OBG-type G domain occupies 160–348; the sequence is ADVGLLGMPN…LVHQINQYLT (189 aa). GTP-binding positions include 166 to 173, 191 to 195, 213 to 216, 284 to 287, and 329 to 331; these read GMPNAGKS, FTTLH, DIPG, NKLD, and SAL. Mg(2+)-binding residues include Ser173 and Thr193.

It belongs to the TRAFAC class OBG-HflX-like GTPase superfamily. OBG GTPase family. Monomer. Requires Mg(2+) as cofactor.

It is found in the cytoplasm. An essential GTPase which binds GTP, GDP and possibly (p)ppGpp with moderate affinity, with high nucleotide exchange rates and a fairly low GTP hydrolysis rate. Plays a role in control of the cell cycle, stress response, ribosome biogenesis and in those bacteria that undergo differentiation, in morphogenesis control. This is GTPase Obg from Neisseria meningitidis serogroup C (strain 053442).